Reading from the N-terminus, the 148-residue chain is MGRFIFVSFGLLVVFLSLSGTGAALNCASGWSGYDQHCYKVFDKPKSWADAEKFCKKQTSGGHLVSFHSSEETDFVVKLVSQTLESQILWMGLSKVWNQCDWGWSNGAKLKYKAWAEESYCVYFSSTKKGWRSRACRLLGHFVCKSPA.

The first 24 residues, 1–24 (MGRFIFVSFGLLVVFLSLSGTGAA), serve as a signal peptide directing secretion. 3 cysteine pairs are disulfide-bonded: C27–C38, C55–C144, and C121–C136. The C-type lectin domain maps to 34–145 (YDQHCYKVFD…CRLLGHFVCK (112 aa)).

Belongs to the snaclec family. In terms of assembly, heterodimer; disulfide-linked. In terms of tissue distribution, expressed by the venom gland.

It localises to the secreted. Interferes with one step of hemostasis (modulation of platelet aggregation, or coagulation cascade, for example). In Macrovipera lebetinus (Levantine viper), this protein is Snaclec B3/B5.